The primary structure comprises 80 residues: Exodeoxyribonuclease 7 small subunit (80 aa).

The segment at 60–80 (LIDSDGTEHNLDPNNASAPEE) is disordered. Residues 61–70 (IDSDGTEHNL) are compositionally biased toward basic and acidic residues. Polar residues predominate over residues 71–80 (DPNNASAPEE).

It belongs to the XseB family. Heterooligomer composed of large and small subunits.

The protein localises to the cytoplasm. The catalysed reaction is Exonucleolytic cleavage in either 5'- to 3'- or 3'- to 5'-direction to yield nucleoside 5'-phosphates.. Functionally, bidirectionally degrades single-stranded DNA into large acid-insoluble oligonucleotides, which are then degraded further into small acid-soluble oligonucleotides. The sequence is that of Exodeoxyribonuclease 7 small subunit from Lactobacillus acidophilus (strain ATCC 700396 / NCK56 / N2 / NCFM).